The following is a 370-amino-acid chain: Probable G-protein coupled receptor 85 (370 aa).

Over 1–25 the chain is Extracellular; sequence MANYSHAADNILQNLSPLTAFLKLT. An N-linked (GlcNAc...) asparagine glycan is attached at N3. A helical transmembrane segment spans residues 26-46; it reads SLGFIIGVSVVGNLLISILLV. The Cytoplasmic segment spans residues 47-57; sequence KDKTLHRAPYY. The helical transmembrane segment at 58-78 threads the bilayer; the sequence is FLLDLCCSDILRSAICFPFVF. The Extracellular portion of the chain corresponds to 79–96; sequence NSVKNGSTWTYGTLTCKV. The N-linked (GlcNAc...) asparagine glycan is linked to N83. C94 and C172 are joined by a disulfide. The helical transmembrane segment at 97-117 threads the bilayer; that stretch reads IAFLGVLSCFHTAFMLFCISV. The Cytoplasmic segment spans residues 118-137; that stretch reads TRYLAIAHHRFYTKRLTFWT. Residues 138-158 traverse the membrane as a helical segment; the sequence is CLAVICMVWTLSVAMAFPPVL. At 159-188 the chain is on the extracellular side; the sequence is DVGTYSFIREEDQCTFQHRSFRANDSLGFM. The N-linked (GlcNAc...) asparagine glycan is linked to N182. A helical membrane pass occupies residues 189-209; the sequence is LLLALILLATQLVYLKLIFFV. Residues 210–286 lie on the Cytoplasmic side of the membrane; sequence HDRRKMKPVQ…FKMEKRISRM (77 aa). A helical transmembrane segment spans residues 287–307; the sequence is FYIMTFLFLTLWGPYLVACYW. At 308–313 the chain is on the extracellular side; the sequence is RVFARG. A helical membrane pass occupies residues 314–334; it reads PVVPGGFLTAAVWMSFAQAGI. Residues 335–370 lie on the Cytoplasmic side of the membrane; the sequence is NPFVCIFSNRELRRCFSTTLLYCRKSRLPREPYCVI.

This sequence belongs to the G-protein coupled receptor 1 family. In terms of assembly, interacts with DLG4 and DLG3. As to expression, highly expressed in brain and testis. Lower levels in small intestine, placenta and spleen. In brain regions, detected in all regions tested, but somewhat lower levels in the corpus callosum, medulla and spinal cord.

It is found in the cell membrane. The protein resides in the endoplasmic reticulum. Functionally, orphan receptor. The chain is Probable G-protein coupled receptor 85 (GPR85) from Homo sapiens (Human).